The chain runs to 263 residues: Polyglutamine-binding protein 1 (263 aa).

The WW domain maps to 46–80 (EGLPPSWYKVFDPSCGLPYYWNVETDLVSWLSPHD). The disordered stretch occupies residues 94 to 263 (NSNADAEDKS…AEASRSKQQD (170 aa)). Over residues 99–173 (AEDKSERNLE…DKADREDGKD (75 aa)) the composition is skewed to basic and acidic residues. The 1-1; approximate repeat unit spans residues 104 to 110 (ERNLEKV). The interval 104–138 (ERNLEKVDRNHEKSDRSHEKPDRSHEKADRNHEKS) is 5 X 7 AA approximate tandem repeats of D-R-[NS]-H-E-K-S. The 1-2 repeat unit spans residues 111 to 117 (DRNHEKS). The 1-3; approximate repeat unit spans residues 118-124 (DRSHEKP). A 1-4; approximate repeat occupies 125-131 (DRSHEKA). Repeat copies occupy residues 132–138 (DRNHEKS), 139–140 (DR), 141–142 (ER), 143–144 (ER), 150–151 (DR), 152–153 (ER), 154–155 (DR), 156–157 (DR), 158–159 (ER), and 160–161 (ER). The tract at residues 139-144 (DRERER) is 3 X 2 AA tandem repeats of [DE]-R. Residues 150-161 (DRERDRDRERER) are 6 X 2 AA tandem repeats of [DE]-R. Residues 243–253 (YPSPGAVLRAN) are important for interaction with TXNL4A. The residue at position 245 (S245) is a Phosphoserine.

As to quaternary structure, interacts with POU3F2/Brn-2, ATXN1, TXNL4A, HTT and AR. Interaction with ATXN1 correlates positively with the length of the polyglutamine tract. Interacts with RNA polymerase II large subunit in a phosphorylation-dependent manner. Forms a ternary complex with ATXN1 mutant and phosphorylated RNA polymerase II. Interacts (via C-terminus) with TXNL4A and CD2BP2. Interacts (via WW domain) with ATN1 and SF3B1, and may interact with additional splice factors. Interacts (via WW domain) with WBP11; Leading to reduce interaction between PQBP1 and TXNL4A. Interacts with CAPRIN1. Interacts with DDX1. Interacts with SFPQ. Interacts with KHSRP.

Its subcellular location is the nucleus. It localises to the nucleus speckle. The protein resides in the cytoplasmic granule. In terms of biological role, intrinsically disordered protein that acts as a scaffold, and which is involved in different processes, such as pre-mRNA splicing, transcription regulation, innate immunity and neuron development. Interacts with splicing-related factors via the intrinsically disordered region and regulates alternative splicing of target pre-mRNA species. May suppress the ability of POU3F2 to transactivate the DRD1 gene in a POU3F2 dependent manner. Can activate transcription directly or via association with the transcription machinery. May be involved in ATXN1 mutant-induced cell death. The interaction with ATXN1 mutant reduces levels of phosphorylated RNA polymerase II large subunit. Involved in the assembly of cytoplasmic stress granule, possibly by participating in the transport of neuronal RNA granules. Also acts as an innate immune sensor of infection by retroviruses, by detecting the presence of reverse-transcribed DNA in the cytosol. Directly binds retroviral reverse-transcribed DNA in the cytosol and interacts with CGAS, leading to activate the cGAS-STING signaling pathway, triggering type-I interferon production. This chain is Polyglutamine-binding protein 1 (Pqbp1), found in Rattus norvegicus (Rat).